Here is a 271-residue protein sequence, read N- to C-terminus: Putative pyruvate, phosphate dikinase regulatory protein 1 (271 aa).

156–163 is a binding site for ADP; that stretch reads GVSRTSKT.

The protein belongs to the pyruvate, phosphate/water dikinase regulatory protein family. PDRP subfamily.

It catalyses the reaction N(tele)-phospho-L-histidyl/L-threonyl-[pyruvate, phosphate dikinase] + ADP = N(tele)-phospho-L-histidyl/O-phospho-L-threonyl-[pyruvate, phosphate dikinase] + AMP + H(+). The catalysed reaction is N(tele)-phospho-L-histidyl/O-phospho-L-threonyl-[pyruvate, phosphate dikinase] + phosphate + H(+) = N(tele)-phospho-L-histidyl/L-threonyl-[pyruvate, phosphate dikinase] + diphosphate. Bifunctional serine/threonine kinase and phosphorylase involved in the regulation of the pyruvate, phosphate dikinase (PPDK) by catalyzing its phosphorylation/dephosphorylation. This is Putative pyruvate, phosphate dikinase regulatory protein 1 from Staphylococcus saprophyticus subsp. saprophyticus (strain ATCC 15305 / DSM 20229 / NCIMB 8711 / NCTC 7292 / S-41).